The primary structure comprises 158 residues: CD-NTase/cGAS isopeptidase (158 aa).

Glu38 acts as the Proton donor/acceptor in catalysis. Residues His100, His102, and Asp113 each contribute to the Zn(2+) site.

This sequence belongs to the peptidase M67B family. Cap3 isopeptidase subfamily.

Metalloprotease priming reversal component of a CBASS antivirus system. CBASS (cyclic oligonucleotide-based antiphage signaling system) provides immunity against bacteriophages. The CD-NTase protein synthesizes cyclic nucleotides in response to infection; these serve as specific second messenger signals. The signals activate a diverse range of effectors, leading to bacterial cell death and thus abortive phage infection. A type II-A(GA) CBASS system. Functionally, reverses the primed state of CdnA, the CD-NTase. In terms of biological role, the capV-cdnA-cap2-cap3 operon provides about 10(4)-fold protection in strain BWHPSA011 against infection by phage PaMx41. In P.aeruginosa strain PAO1 it confers protection against phages PaMx41 and JBD18 but not JBD67 (JBD18 and JBD67 do not replicate in BWHPSA011 / Pa011). When acb2 in JBD67 is deleted this CBASS operon then protects against JDB67 also. This CBASS system limits prophage induction of lysogenized JBD67 as well as viral lytic replication. The polypeptide is CD-NTase/cGAS isopeptidase (Pseudomonas aeruginosa (strain BWHPSA011 / Pa011)).